The following is a 396-amino-acid chain: Elongation factor Tu (396 aa).

Residues 10–206 (KPHCNIGTIG…EVDAYIPQPE (197 aa)) form the tr-type G domain. The segment at 19 to 26 (GHVDHGKT) is G1. 19–26 (GHVDHGKT) lines the GTP pocket. Mg(2+) is bound at residue Thr26. The interval 60-64 (GITIS) is G2. Residues 81–84 (DCPG) are G3. Residues 81-85 (DCPGH) and 136-139 (NKCD) each bind GTP. The G4 stretch occupies residues 136–139 (NKCD). The interval 174 to 176 (SAL) is G5.

It belongs to the TRAFAC class translation factor GTPase superfamily. Classic translation factor GTPase family. EF-Tu/EF-1A subfamily. Monomer.

It is found in the cytoplasm. It catalyses the reaction GTP + H2O = GDP + phosphate + H(+). In terms of biological role, GTP hydrolase that promotes the GTP-dependent binding of aminoacyl-tRNA to the A-site of ribosomes during protein biosynthesis. The chain is Elongation factor Tu from Paramagnetospirillum magneticum (strain ATCC 700264 / AMB-1) (Magnetospirillum magneticum).